A 340-amino-acid chain; its full sequence is Ketol-acid reductoisomerase (NADP(+)) (340 aa).

The 181-residue stretch at 2-182 (AELYYDNQAD…GCTRAGVLRT (181 aa)) folds into the KARI N-terminal Rossmann domain. Residues 25–28 (FGSQ), S51, S53, and 83–86 (DIGQ) contribute to the NADP(+) site. The active site involves H108. G134 is a binding site for NADP(+). The region spanning 183–328 (TFAEETETDL…RELRRMMPFV (146 aa)) is the KARI C-terminal knotted domain. Residues D191, E195, E227, and E231 each coordinate Mg(2+). Residue S252 coordinates substrate.

The protein belongs to the ketol-acid reductoisomerase family. It depends on Mg(2+) as a cofactor.

It catalyses the reaction (2R)-2,3-dihydroxy-3-methylbutanoate + NADP(+) = (2S)-2-acetolactate + NADPH + H(+). The enzyme catalyses (2R,3R)-2,3-dihydroxy-3-methylpentanoate + NADP(+) = (S)-2-ethyl-2-hydroxy-3-oxobutanoate + NADPH + H(+). Its pathway is amino-acid biosynthesis; L-isoleucine biosynthesis; L-isoleucine from 2-oxobutanoate: step 2/4. The protein operates within amino-acid biosynthesis; L-valine biosynthesis; L-valine from pyruvate: step 2/4. In terms of biological role, involved in the biosynthesis of branched-chain amino acids (BCAA). Catalyzes an alkyl-migration followed by a ketol-acid reduction of (S)-2-acetolactate (S2AL) to yield (R)-2,3-dihydroxy-isovalerate. In the isomerase reaction, S2AL is rearranged via a Mg-dependent methyl migration to produce 3-hydroxy-3-methyl-2-ketobutyrate (HMKB). In the reductase reaction, this 2-ketoacid undergoes a metal-dependent reduction by NADPH to yield (R)-2,3-dihydroxy-isovalerate. The protein is Ketol-acid reductoisomerase (NADP(+)) of Chloroflexus aurantiacus (strain ATCC 29366 / DSM 635 / J-10-fl).